A 315-amino-acid polypeptide reads, in one-letter code: Cobalamin biosynthesis protein CobD (315 aa).

Transmembrane regions (helical) follow at residues 48 to 68 (IAGF…TLGI), 77 to 97 (PILG…AKGL), 150 to 170 (DGII…AFLY), 200 to 220 (VFNY…SFIL), and 295 to 315 (MVSF…EVII).

Belongs to the CobD/CbiB family.

The protein resides in the cell membrane. Its pathway is cofactor biosynthesis; adenosylcobalamin biosynthesis. In terms of biological role, converts cobyric acid to cobinamide by the addition of aminopropanol on the F carboxylic group. This chain is Cobalamin biosynthesis protein CobD, found in Clostridium perfringens (strain 13 / Type A).